A 562-amino-acid chain; its full sequence is Protein wntless (562 aa).

Over 1-13 the chain is Cytoplasmic; the sequence is MSGTILENLSGRK. Residues 14 to 34 form a helical membrane-spanning segment; that stretch reads LSILVGSLLLCQVLCFLLGGL. At 35 to 239 the chain is on the lumenal side; that stretch reads YAPVPAGHTN…AIHQNGGFTH (205 aa). N-linked (GlcNAc...) asparagine glycosylation is present at N58. The helical transmembrane segment at 240–260 threads the bilayer; the sequence is VWLMLKTLLFPFVVGIMVWFW. At 261–270 the chain is on the cytoplasmic side; sequence RRVHLLQRSP. A helical membrane pass occupies residues 271–291; it reads ALLEYMLLYLGGALTFLNLPL. The Lumenal portion of the chain corresponds to 292-311; the sequence is EYLSLTIEMPYMLLLSDIRQ. Residues 312 to 332 form a helical membrane-spanning segment; sequence GIFYAMLLSFWLVFAGEHMLI. At 333 to 344 the chain is on the cytoplasmic side; that stretch reads QDSSNKSTIRSR. Residues 345 to 365 traverse the membrane as a helical segment; the sequence is YWKHLSAVVVGCISLFVFDIS. Residues 366–386 lie on the Lumenal side of the membrane; that stretch reads ERGVQLRNPFYSIWTTPLGAK. A helical transmembrane segment spans residues 387-407; it reads VAMSFILLAGVSAAVYFLFLC. Topologically, residues 408 to 441 are cytoplasmic; sequence YMISKVFKNIGDKRTSLPSMSQARRLHYEGLIYR. A helical membrane pass occupies residues 442 to 462; that stretch reads FKFLMLATLLCAALTVTGFIM. Residues 463 to 482 are Lumenal-facing; it reads GQMAEGQWKWNDDVEIQLTS. A helical membrane pass occupies residues 483–503; sequence AFLTGVYGMWNIYIFALLILY. The Cytoplasmic segment spans residues 504 to 562; that stretch reads APSHKQWPTMHHSDETTQSNENIVASAASEEIEFSNLPSDSNPSEISSLTSFTRKVAFE. The disordered stretch occupies residues 538–562; it reads SNLPSDSNPSEISSLTSFTRKVAFE. The segment covering 539 to 556 has biased composition (polar residues); it reads NLPSDSNPSEISSLTSFT.

This sequence belongs to the wntless family. As to quaternary structure, interacts with wg; in the Golgi. Interacts with Vps35, a component of the retromer complex; wls stability is regulated by Vps35.

The protein resides in the presynaptic cell membrane. The protein localises to the postsynaptic cell membrane. It is found in the cell membrane. Its subcellular location is the endoplasmic reticulum membrane. It localises to the endosome membrane. The protein resides in the golgi apparatus membrane. A segment polarity gene required for wingless (wg)-dependent patterning processes, acting in both wg-sending cells and wg-target cells. In non-neuronal cells wls directs wg secretion. The wls traffic loop encompasses the Golgi, the cell surface, an endocytic compartment and a retrograde route leading back to the Golgi, and involves clathrin-mediated endocytosis and the retromer complex (a conserved protein complex consisting of Vps35 and Vps26). In neuronal cells (the larval motorneuron NMJ), the wg signal moves across the synapse via the release of wls-containing exosome-like vesicles. Postsynaptic wls is required for the trafficking of fz2 through the fz2-interacting protein Grip. This is Protein wntless from Drosophila pseudoobscura pseudoobscura (Fruit fly).